The primary structure comprises 145 residues: MGCGGSRADAIEPRYYESWTRETESTWLTYTDSDALPSAAATDSGPEAGGLHAGVLEDGPSSNGVLRPAAPGGIANPEKKMNCGTQCPNSQSLSSGPLTQKQNGLWTTEAKRDAKRMSAREVAISVTENIRQMDRSKRVTKNCIN.

Gly-2 carries N-myristoyl glycine lipidation. The S-palmitoyl cysteine moiety is linked to residue Cys-3. The tract at residues 3-35 (CGGSRADAIEPRYYESWTRETESTWLTYTDSDA) is interaction with CAMK2A. The segment at 36–113 (LPSAAATDSG…GLWTTEAKRD (78 aa)) is disordered. The span at 83 to 106 (CGTQCPNSQSLSSGPLTQKQNGLW) shows a compositional bias: polar residues.

In terms of assembly, interacts with CAMK2A. In terms of processing, palmitoylation and myristoylation target the protein to the lipid rafts. Predominantly expressed in the brain (at protein level). Within the brain, found in most of forebrain structures, including the cerebral cortex, hippocampal formation, olfactory bulb, anterior olfactory nuclei, piriform cortex, tenia tecta and amygdaloid nuclei. Not detected in glial cells.

The protein resides in the cytoplasm. It is found in the synapse. It localises to the synaptosome. The protein localises to the membrane raft. Its subcellular location is the postsynaptic density. Its function is as follows. May play a synaptic role at the postsynaptic lipid rafts possibly through interaction with CAMK2A. The chain is Brain and acute leukemia cytoplasmic protein (Baalc) from Rattus norvegicus (Rat).